Reading from the N-terminus, the 276-residue chain is Ribonuclease T2 (276 aa).

Positions 1 to 17 (MGMLALGAMQLAAGAVF) are cleaved as a signal peptide. 5 cysteine pairs are disulfide-bonded: Cys22–Cys41, Cys30–Cys77, Cys40–Cys143, Cys85–Cys135, and Cys208–Cys242. N-linked (GlcNAc...) asparagine glycosylation occurs at Asn32. His70 is a catalytic residue. Asn93 carries an N-linked (GlcNAc...) asparagine glycan. Catalysis depends on residues Glu128 and His132. An N-linked (GlcNAc...) asparagine glycan is attached at Asn256.

It belongs to the RNase T2 family.

The enzyme catalyses a ribonucleotidyl-ribonucleotide-RNA + H2O = a 3'-end 3'-phospho-ribonucleotide-RNA + a 5'-end dephospho-ribonucleoside-RNA + H(+). This chain is Ribonuclease T2 (rntB), found in Aspergillus oryzae (strain ATCC 42149 / RIB 40) (Yellow koji mold).